A 716-amino-acid chain; its full sequence is MEKKKRELDIVLLLILLASAFLNIYNIWKDDTVNPYYTAAVTSMMQSFHNFFYASFDAAGFITVDKPPVTYQIQTISALIFGMHGWSVILPQALAGVGSVLLMYLLIKPTFGKTAARIASFVMACTPIAVAVARTNNVDALLVFFLLLATWLLFKAIRKGKLIWLLAAFFVVGVGFNTKMLQAYMILPAFLLFYLIAANATIKKKIVSLVSALAVLAAVSLSWPLIVDNIPASKRPYIGSSQTNSVLELAFGYNGIQRLTGQNSGGGQGAPNKDASKEMSSSDNTQAPPNQSSSNSSSSDGKSSNGNMAAPPSNGQMPSGGQGGPPSGGDGGQGGPGGDGGKGGTGTGSKMQSGSGMFGTGTPGPLRLFQQELSDQISWLLPFAIFGIAGLLIAGARERRRLSVEQKETVFWVAWLVPIAGFFSVAEFFHHYYLIMLAPPIAALVGAGWVALVHLYRNQTGWKAWLLPGAIIATTGFELFILRNYNDQIGVGWSIGVGVIGVLSAIALLLFKQRQKPFSYYVSLAALLALLVMPMYWASTPLLYGGNSSLPETGPQLASMSGKGMGMSDATVNEKLIKYLEENNSGAEYLFATTDSNTAAPYIIKTKKAVMAIGGYSGSDPAITLTQFKKLVKEGKVKYFLASGMGRGGNNDIVEWVEKNGKEVASEKWQSSSDQKTENTDSADTSSSKASGENGKMGGPGGMNQSATLYELHADE.

The next 8 helical transmembrane spans lie at 8 to 28 (LDIV…YNIW), 44 to 64 (MMQS…FITV), 87 to 107 (SVIL…YLLI), 118 to 135 (IASF…VART), 137 to 157 (NVDA…FKAI), 159 to 179 (KGKL…FNTK), 180 to 200 (MLQA…AANA), and 206 to 226 (IVSL…WPLI). The disordered stretch occupies residues 260–363 (TGQNSGGGQG…GSGMFGTGTP (104 aa)). The span at 278–289 (EMSSSDNTQAPP) shows a compositional bias: polar residues. Residues 290–307 (NQSSSNSSSSDGKSSNGN) show a composition bias toward low complexity. The span at 318-347 (PSGGQGGPPSGGDGGQGGPGGDGGKGGTGT) shows a compositional bias: gly residues. Transmembrane regions (helical) follow at residues 376-396 (QISW…IAGA), 409-429 (TVFW…AEFF), 433-453 (YLIM…VALV), 462-482 (WKAW…LFIL), 491-511 (VGWS…LLLF), and 518-538 (FSYY…MYWA). The tract at residues 664-716 (VASEKWQSSSDQKTENTDSADTSSSKASGENGKMGGPGGMNQSATLYELHADE) is disordered. Residues 680 to 694 (TDSADTSSSKASGEN) show a composition bias toward low complexity.

This sequence belongs to the glycosyltransferase 39 family.

The protein resides in the cell membrane. The protein is Putative mannosyltransferase YkcB (ykcB) of Bacillus subtilis (strain 168).